The chain runs to 344 residues: Neurotrimin (344 aa).

Positions 1-33 (MGVCGYLFLPWKCLVVVSLRLLFLVPTGVPVRS) are cleaved as a signal peptide. Ig-like C2-type domains follow at residues 39–126 (PKAM…PKTS), 136–218 (PKIV…VKVT), and 222–309 (PPYI…ASIM). Residues Asn44, Asn70, and Asn152 are each glycosylated (N-linked (GlcNAc...) asparagine). A disulfide bridge links Cys57 with Cys115. 2 disulfides stabilise this stretch: Cys157–Cys201 and Cys243–Cys295. N-linked (GlcNAc...) asparagine glycans are attached at residues Asn284, Asn292, and Asn305. A lipid anchor (GPI-anchor amidated asparagine; alternate) is attached at Asn321. Residue Asn321 is glycosylated (N-linked (GlcNAc...) asparagine; alternate). Residues 322–344 (GTSRRAGCIWLLPLLVLHLLLKF) constitute a propeptide, removed in mature form.

The protein belongs to the immunoglobulin superfamily. IgLON family.

It localises to the cell membrane. Its function is as follows. Neural cell adhesion molecule. This chain is Neurotrimin (Ntm), found in Mus musculus (Mouse).